Here is a 267-residue protein sequence, read N- to C-terminus: 5'-nucleotidase SurE (267 aa).

4 residues coordinate a divalent metal cation: Asp-9, Asp-10, Ser-40, and Asn-97.

Belongs to the SurE nucleotidase family. A divalent metal cation serves as cofactor.

The protein localises to the cytoplasm. The enzyme catalyses a ribonucleoside 5'-phosphate + H2O = a ribonucleoside + phosphate. Nucleotidase that shows phosphatase activity on nucleoside 5'-monophosphates. In Helicobacter pylori (strain ATCC 700392 / 26695) (Campylobacter pylori), this protein is 5'-nucleotidase SurE.